Reading from the N-terminus, the 436-residue chain is UPF0597 protein YhaM (436 aa).

This sequence belongs to the UPF0597 family.

In Salmonella heidelberg (strain SL476), this protein is UPF0597 protein YhaM.